The primary structure comprises 86 residues: uncharacterized protein (86 aa).

As to expression, retina-specific.

This is an uncharacterized protein from Homo sapiens (Human).